A 299-amino-acid chain; its full sequence is Bifunctional protein FolD (299 aa).

Residues 168-170, serine 193, and isoleucine 234 each bind NADP(+); that span reads GRS.

The protein belongs to the tetrahydrofolate dehydrogenase/cyclohydrolase family. In terms of assembly, homodimer.

It carries out the reaction (6R)-5,10-methylene-5,6,7,8-tetrahydrofolate + NADP(+) = (6R)-5,10-methenyltetrahydrofolate + NADPH. The catalysed reaction is (6R)-5,10-methenyltetrahydrofolate + H2O = (6R)-10-formyltetrahydrofolate + H(+). It participates in one-carbon metabolism; tetrahydrofolate interconversion. Its function is as follows. Catalyzes the oxidation of 5,10-methylenetetrahydrofolate to 5,10-methenyltetrahydrofolate and then the hydrolysis of 5,10-methenyltetrahydrofolate to 10-formyltetrahydrofolate. The protein is Bifunctional protein FolD of Brucella anthropi (strain ATCC 49188 / DSM 6882 / CCUG 24695 / JCM 21032 / LMG 3331 / NBRC 15819 / NCTC 12168 / Alc 37) (Ochrobactrum anthropi).